Here is a 414-residue protein sequence, read N- to C-terminus: Probable indole-3-pyruvate monooxygenase YUCCA1 (414 aa).

25-30 (GAGPSG) is a binding site for FAD. NADP(+) is bound at residue 189-194 (GCGNSG).

This sequence belongs to the FMO family. FAD serves as cofactor. Expressed in the apical meristems and young floral primordia. Detected in the floral meristems and at the base of the floral organs.

It carries out the reaction indole-3-pyruvate + NADPH + O2 + H(+) = (indol-3-yl)acetate + CO2 + NADP(+) + H2O. The protein operates within plant hormone metabolism; auxin biosynthesis. Functionally, involved in auxin biosynthesis, but not in the tryptamine or the CYP79B2/B3 branches. Catalyzes in vitro the N-oxidation of tryptamine to form N-hydroxyl tryptamine. Involved during embryogenesis and seedling development. Required for the formation of floral organs and vascular tissues. Belongs to the set of redundant YUCCA genes probably responsible for auxin biosynthesis in shoots. The protein is Probable indole-3-pyruvate monooxygenase YUCCA1 (YUC1) of Arabidopsis thaliana (Mouse-ear cress).